Here is a 414-residue protein sequence, read N- to C-terminus: Coenzyme A biosynthesis bifunctional protein CoaBC (414 aa).

Residues 1–191 (MSARKRIVVG…ALPYDMAGVK (191 aa)) form a phosphopantothenoylcysteine decarboxylase region. Residues 192–414 (ALVTAGGTRE…IAAFLKSQDG (223 aa)) form a phosphopantothenate--cysteine ligase region. CTP contacts are provided by residues 275 to 277 (MAA), D281, K291, 293 to 294 (KK), 308 to 311 (DDVL), F332, K350, and K354.

It in the N-terminal section; belongs to the HFCD (homo-oligomeric flavin containing Cys decarboxylase) superfamily. In the C-terminal section; belongs to the PPC synthetase family. As to quaternary structure, homododecamer. Requires Mg(2+) as cofactor. The cofactor is FMN.

It catalyses the reaction N-[(R)-4-phosphopantothenoyl]-L-cysteine + H(+) = (R)-4'-phosphopantetheine + CO2. The catalysed reaction is (R)-4'-phosphopantothenate + L-cysteine + CTP = N-[(R)-4-phosphopantothenoyl]-L-cysteine + CMP + diphosphate + H(+). It participates in cofactor biosynthesis; coenzyme A biosynthesis; CoA from (R)-pantothenate: step 2/5. Its pathway is cofactor biosynthesis; coenzyme A biosynthesis; CoA from (R)-pantothenate: step 3/5. With respect to regulation, two related chemical scaffolds that potently inhibit the activity of the CoaB moiety of CoaBC through a cryptic allosteric site that sits in the dimer interface region of the CoaB enzyme were identified. Its function is as follows. Catalyzes two sequential steps in the biosynthesis of coenzyme A. In the first step cysteine is conjugated to 4'-phosphopantothenate to form 4-phosphopantothenoylcysteine. In the second step the latter compound is decarboxylated to form 4'-phosphopantotheine. In Mycolicibacterium smegmatis (strain ATCC 700084 / mc(2)155) (Mycobacterium smegmatis), this protein is Coenzyme A biosynthesis bifunctional protein CoaBC.